Consider the following 472-residue polypeptide: Uronate isomerase (472 aa).

Belongs to the metallo-dependent hydrolases superfamily. Uronate isomerase family.

It catalyses the reaction D-glucuronate = D-fructuronate. It carries out the reaction aldehydo-D-galacturonate = keto-D-tagaturonate. It participates in carbohydrate metabolism; pentose and glucuronate interconversion. In Oceanobacillus iheyensis (strain DSM 14371 / CIP 107618 / JCM 11309 / KCTC 3954 / HTE831), this protein is Uronate isomerase.